A 346-amino-acid polypeptide reads, in one-letter code: tRNA N6-adenosine threonylcarbamoyltransferase (346 aa).

Fe cation is bound by residues His111 and His115. Residues 134–138, Asp167, Gly180, and Asn277 contribute to the substrate site; that span reads LVSGG. Asp305 is a binding site for Fe cation.

It belongs to the KAE1 / TsaD family. It depends on Fe(2+) as a cofactor.

The protein resides in the cytoplasm. It carries out the reaction L-threonylcarbamoyladenylate + adenosine(37) in tRNA = N(6)-L-threonylcarbamoyladenosine(37) in tRNA + AMP + H(+). Required for the formation of a threonylcarbamoyl group on adenosine at position 37 (t(6)A37) in tRNAs that read codons beginning with adenine. Is involved in the transfer of the threonylcarbamoyl moiety of threonylcarbamoyl-AMP (TC-AMP) to the N6 group of A37, together with TsaE and TsaB. TsaD likely plays a direct catalytic role in this reaction. This Bordetella parapertussis (strain 12822 / ATCC BAA-587 / NCTC 13253) protein is tRNA N6-adenosine threonylcarbamoyltransferase.